A 523-amino-acid polypeptide reads, in one-letter code: Bifunctional purine biosynthesis protein PurH (523 aa).

One can recognise an MGS-like domain in the interval 1–154; the sequence is MTATAGSNKR…KNHPSVAVVT (154 aa).

This sequence belongs to the PurH family.

It catalyses the reaction (6R)-10-formyltetrahydrofolate + 5-amino-1-(5-phospho-beta-D-ribosyl)imidazole-4-carboxamide = 5-formamido-1-(5-phospho-D-ribosyl)imidazole-4-carboxamide + (6S)-5,6,7,8-tetrahydrofolate. It carries out the reaction IMP + H2O = 5-formamido-1-(5-phospho-D-ribosyl)imidazole-4-carboxamide. It functions in the pathway purine metabolism; IMP biosynthesis via de novo pathway; 5-formamido-1-(5-phospho-D-ribosyl)imidazole-4-carboxamide from 5-amino-1-(5-phospho-D-ribosyl)imidazole-4-carboxamide (10-formyl THF route): step 1/1. The protein operates within purine metabolism; IMP biosynthesis via de novo pathway; IMP from 5-formamido-1-(5-phospho-D-ribosyl)imidazole-4-carboxamide: step 1/1. This is Bifunctional purine biosynthesis protein PurH from Streptomyces coelicolor (strain ATCC BAA-471 / A3(2) / M145).